The primary structure comprises 531 residues: Phosphoinositide phospholipase C 9 (531 aa).

In terms of domain architecture, PI-PLC X-box spans 107–253; it reads RDMNAPLSHY…LQNKILISRR (147 aa). In terms of domain architecture, PI-PLC Y-box spans 265–385; that stretch reads ENGVELEIQE…GYVKKPNFLL (121 aa). Ser-276 carries the phosphoserine modification. The C2 domain maps to 386 to 513; sequence NAGSSGVFYP…EGIRAVPLYD (128 aa).

Ca(2+) is required as a cofactor. In terms of tissue distribution, expressed in leaves, roots, flowers and siliques.

The protein localises to the cell membrane. The enzyme catalyses a 1,2-diacyl-sn-glycero-3-phospho-(1D-myo-inositol-4,5-bisphosphate) + H2O = 1D-myo-inositol 1,4,5-trisphosphate + a 1,2-diacyl-sn-glycerol + H(+). Functionally, the production of the second messenger molecules diacylglycerol (DAG) and inositol 1,4,5-trisphosphate (IP3) is mediated by activated phosphatidylinositol-specific phospholipase C enzymes. This is Phosphoinositide phospholipase C 9 (PLC9) from Arabidopsis thaliana (Mouse-ear cress).